The chain runs to 196 residues: dTTP/UTP pyrophosphatase (196 aa).

Residue aspartate 72 is the Proton acceptor of the active site.

This sequence belongs to the Maf family. YhdE subfamily. It depends on a divalent metal cation as a cofactor.

The protein resides in the cytoplasm. It carries out the reaction dTTP + H2O = dTMP + diphosphate + H(+). It catalyses the reaction UTP + H2O = UMP + diphosphate + H(+). In terms of biological role, nucleoside triphosphate pyrophosphatase that hydrolyzes dTTP and UTP. May have a dual role in cell division arrest and in preventing the incorporation of modified nucleotides into cellular nucleic acids. The chain is dTTP/UTP pyrophosphatase from Chlamydia trachomatis serovar L2 (strain ATCC VR-902B / DSM 19102 / 434/Bu).